The chain runs to 228 residues: UPF0758 protein CLB_3028 (228 aa).

Positions K106 to I228 constitute an MPN domain. Zn(2+)-binding residues include H177, H179, and D190. A JAMM motif motif is present at residues H177–D190.

This sequence belongs to the UPF0758 family.

This Clostridium botulinum (strain ATCC 19397 / Type A) protein is UPF0758 protein CLB_3028.